The primary structure comprises 559 residues: Glycerol kinase (559 aa).

Position 20 (T20) interacts with ADP. ATP is bound by residues T20, S21, and S22. T20 contacts sn-glycerol 3-phosphate. R24 provides a ligand contact to ADP. Residues R94, E95, and Y148 each contribute to the sn-glycerol 3-phosphate site. Glycerol-binding residues include R94, E95, and Y148. G252 contacts beta-D-fructose 1,6-bisphosphate. A sn-glycerol 3-phosphate-binding site is contributed by D265. Glycerol-binding residues include D265 and Q266. 4 residues coordinate ADP: T287, G332, G433, and N437. 3 residues coordinate ATP: T287, G332, and G433. E501 provides a ligand contact to Zn(2+). Residues I532–A552 traverse the membrane as a helical segment.

The protein belongs to the FGGY kinase family.

The protein resides in the mitochondrion outer membrane. The protein localises to the nucleus. It localises to the cytoplasm. Its subcellular location is the cytosol. It catalyses the reaction glycerol + ATP = sn-glycerol 3-phosphate + ADP + H(+). It participates in polyol metabolism; glycerol degradation via glycerol kinase pathway; sn-glycerol 3-phosphate from glycerol: step 1/1. Its function is as follows. Kinase that plays a key role in glycerol metabolism, catalyzing its phosphorylation to produce sn-glycerol 3-phosphate. Sn-glycerol 3-phosphate is a crucial intermediate in various metabolic pathways, such as the synthesis of glycerolipids and triglycerides, glycogenesis, glycolysis and gluconeogenesis. This is Glycerol kinase from Bos taurus (Bovine).